We begin with the raw amino-acid sequence, 1286 residues long: Lysine-specific demethylase JMJ705 (1286 aa).

Positions 25–66 (APEFRPTAAEFADPVSYILKIEPAAAPYGICKVVPPLPPPPK) constitute a JmjN domain. The interval 82-105 (PDDRSPSFPTRHQQVGLCPRRTRP) is disordered. The region spanning 201-367 (ETAWNMRGVA…IAKEAAIRRA (167 aa)) is the JmjC domain. Fe cation contacts are provided by His-244, Glu-246, and His-335. Residues 641–679 (PNSSNNVGCVGTKLSSSSTERQERPSSQNAHCNGSSVIS) show a composition bias toward polar residues. 3 disordered regions span residues 641–686 (PNSS…KGVR), 1013–1060 (AEPV…HSQE), and 1077–1164 (PAGT…PKQA). The span at 1119–1136 (HASGQKSNVQEANANSAS) shows a compositional bias: polar residues. A C2H2-type 1; degenerate zinc finger spans residues 1167-1189 (YSCDIEGCSMSFRTKRDLSLHKS). 3 C2H2-type zinc fingers span residues 1190-1214 (DICP…RKVH), 1220-1244 (LTCP…LRVH), and 1250-1276 (YVCH…KTGH).

It depends on Fe(2+) as a cofactor. Expressed in leaves and flag leaves. Expressed at low levels in roots, shoots, stems and panicles.

The protein localises to the nucleus. The catalysed reaction is N(6),N(6),N(6)-trimethyl-L-lysyl(27)-[histone H3] + 2 2-oxoglutarate + 2 O2 = N(6)-methyl-L-lysyl(27)-[histone H3] + 2 formaldehyde + 2 succinate + 2 CO2. Functionally, histone demethylase that demethylates 'Lys-27' (H3K27me) of histone H3 with a specific activity for H3K27me3 and H3K27me2. No activity on H3K4me3, H3K9me3, H3K27me1 and H3K36me3. Involved in biotic stress response. May demethylate H3K27me3-marked defense-related genes and increase their basal and induced expression levels during pathogen infection. The chain is Lysine-specific demethylase JMJ705 (JMJ705) from Oryza sativa subsp. japonica (Rice).